The following is a 156-amino-acid chain: Ribosomal RNA large subunit methyltransferase H (156 aa).

Residues leucine 73, glycine 104, and 123–128 (LSSLTL) each bind S-adenosyl-L-methionine.

Belongs to the RNA methyltransferase RlmH family. Homodimer.

It localises to the cytoplasm. It carries out the reaction pseudouridine(1915) in 23S rRNA + S-adenosyl-L-methionine = N(3)-methylpseudouridine(1915) in 23S rRNA + S-adenosyl-L-homocysteine + H(+). Specifically methylates the pseudouridine at position 1915 (m3Psi1915) in 23S rRNA. This Neisseria gonorrhoeae (strain NCCP11945) protein is Ribosomal RNA large subunit methyltransferase H.